Reading from the N-terminus, the 216-residue chain is Ribose-5-phosphate isomerase A (216 aa).

Substrate contacts are provided by residues 26 to 29 (TGST), 79 to 82 (DGAD), and 92 to 95 (KGGG). Glutamate 101 functions as the Proton acceptor in the catalytic mechanism. Position 119 (lysine 119) interacts with substrate.

It belongs to the ribose 5-phosphate isomerase family. In terms of assembly, homodimer.

The catalysed reaction is aldehydo-D-ribose 5-phosphate = D-ribulose 5-phosphate. Its pathway is carbohydrate degradation; pentose phosphate pathway; D-ribose 5-phosphate from D-ribulose 5-phosphate (non-oxidative stage): step 1/1. Functionally, catalyzes the reversible conversion of ribose-5-phosphate to ribulose 5-phosphate. In Legionella pneumophila subsp. pneumophila (strain Philadelphia 1 / ATCC 33152 / DSM 7513), this protein is Ribose-5-phosphate isomerase A.